The sequence spans 217 residues: Adenylate kinase (217 aa).

Position 10–15 (10–15 (GAGKGT)) interacts with ATP. The NMP stretch occupies residues 30 to 59 (STGDIFRKNVADDTPLGRLAKQYMDAGDLV). AMP is bound by residues Thr31, Arg36, 57 to 59 (DLV), 85 to 88 (GFPR), and Gln92. The interval 126 to 163 (GRRTCADCAHVWHVTYDPPTVDGVCDLCGGKLFQREDD) is LID. Arg127 is a binding site for ATP. Zn(2+)-binding residues include Cys130, Cys133, Cys150, and Cys153. 2 residues coordinate AMP: Arg160 and Arg171. Gly199 lines the ATP pocket.

The protein belongs to the adenylate kinase family. As to quaternary structure, monomer.

Its subcellular location is the cytoplasm. It catalyses the reaction AMP + ATP = 2 ADP. Its pathway is purine metabolism; AMP biosynthesis via salvage pathway; AMP from ADP: step 1/1. Catalyzes the reversible transfer of the terminal phosphate group between ATP and AMP. Plays an important role in cellular energy homeostasis and in adenine nucleotide metabolism. The polypeptide is Adenylate kinase (Acidothermus cellulolyticus (strain ATCC 43068 / DSM 8971 / 11B)).